The sequence spans 317 residues: Malate dehydrogenase (317 aa).

NAD(+)-binding positions include 7–13 and D34; that span reads GAAGGIG. Residues R81 and R87 each contribute to the substrate site. NAD(+) contacts are provided by residues N94 and 117–119; that span reads VTN. N119 and R153 together coordinate substrate. H177 serves as the catalytic Proton acceptor. Residue M231 participates in NAD(+) binding.

The protein belongs to the LDH/MDH superfamily. MDH type 1 family. Homodimer.

It carries out the reaction (S)-malate + NAD(+) = oxaloacetate + NADH + H(+). In terms of biological role, catalyzes the reversible oxidation of malate to oxaloacetate. The chain is Malate dehydrogenase from Actinobacillus pleuropneumoniae serotype 7 (strain AP76).